Here is a 518-residue protein sequence, read N- to C-terminus: Metalloprotease TIKI2 (518 aa).

An N-terminal signal peptide occupies residues 1–22 (MNCQSGLRWLVTLCAFFQVGSA). The Extracellular segment spans residues 23 to 499 (RDTHESTRQC…SALDSAAPNP (477 aa)). N-linked (GlcNAc...) asparagine glycans are attached at residues asparagine 224, asparagine 233, asparagine 282, asparagine 325, and asparagine 340. Residues 500–517 (TYALTCFLACLISQLLFA) form a helical membrane-spanning segment. Position 518 (serine 518) is a topological domain, cytoplasmic.

It belongs to the TIKI family. Requires Mn(2+) as cofactor. Co(2+) serves as cofactor.

It localises to the cell membrane. Its function is as follows. Metalloprotease that acts as a negative regulator of the Wnt signaling pathway by mediating the cleavage of the N-terminal residues of a subset of Wnt proteins. Following cleavage, Wnt proteins become oxidized and form large disulfide-bond oligomers, leading to their inactivation. This is Metalloprotease TIKI2 (trabd2b) from Danio rerio (Zebrafish).